The primary structure comprises 148 residues: Large-conductance mechanosensitive channel (148 aa).

2 helical membrane-spanning segments follow: residues 14 to 34 (VVDM…INTL) and 85 to 105 (GIFV…FLSV).

This sequence belongs to the MscL family. In terms of assembly, homopentamer.

It is found in the cell inner membrane. Channel that opens in response to stretch forces in the membrane lipid bilayer. May participate in the regulation of osmotic pressure changes within the cell. The polypeptide is Large-conductance mechanosensitive channel (Chlorobium phaeobacteroides (strain DSM 266 / SMG 266 / 2430)).